The chain runs to 359 residues: Peptide chain release factor 1 (359 aa).

Gln-235 bears the N5-methylglutamine mark.

This sequence belongs to the prokaryotic/mitochondrial release factor family. In terms of processing, methylated by PrmC. Methylation increases the termination efficiency of RF1.

It localises to the cytoplasm. In terms of biological role, peptide chain release factor 1 directs the termination of translation in response to the peptide chain termination codons UAG and UAA. In Anaplasma marginale (strain Florida), this protein is Peptide chain release factor 1.